The following is a 159-amino-acid chain: Ascorbate-specific PTS system EIIA component (159 aa).

Residues 9-152 form the PTS EIIA type-2 domain; sequence VLKQHHTVRL…TSLFAVIDRV (144 aa). Histidine 71 (tele-phosphohistidine intermediate) is an active-site residue. The residue at position 71 (histidine 71) is a Phosphohistidine.

It localises to the cytoplasm. Functionally, the phosphoenolpyruvate-dependent sugar phosphotransferase system (sugar PTS), a major carbohydrate active transport system, catalyzes the phosphorylation of incoming sugar substrates concomitantly with their translocation across the cell membrane. The enzyme II UlaABC PTS system is involved in ascorbate transport. In Mycoplasma pneumoniae (strain ATCC 29342 / M129 / Subtype 1) (Mycoplasmoides pneumoniae), this protein is Ascorbate-specific PTS system EIIA component (ulaC).